The primary structure comprises 337 residues: HTH-type transcriptional repressor PurR (337 aa).

Residues 2–56 (ATIKDVAKLAAVSTTTVSHVINKTRFVAEATQKRVWEAVEELNYAPSAVARSLKC) form the HTH lacI-type domain. Residues 4–23 (IKDVAKLAAVSTTTVSHVIN) constitute a DNA-binding region (H-T-H motif). The DNA-binding element occupies 48–56 (SAVARSLKC). Phe-73, Lys-189, Thr-191, Phe-220, and Asp-276 together coordinate hypoxanthine.

In terms of assembly, homodimer.

Its pathway is purine metabolism; purine nucleotide biosynthesis [regulation]. In terms of biological role, is the main repressor of the genes involved in the de novo synthesis of purine nucleotides, regulating purB, purC, purEK, purF, purHD, purL, purMN and guaBA expression. PurR is allosterically activated to bind its cognate DNA by binding the purine corepressors, hypoxanthine or guanine, thereby effecting transcription repression. This is HTH-type transcriptional repressor PurR from Aliivibrio fischeri (strain MJ11) (Vibrio fischeri).